The primary structure comprises 369 residues: MSDLEQLERQILEDIAAAADEPAIEAVRVAALGKKGSVSEKLKTLGSMTPEERQAQGPAINGLKNRVTEALTERKTELRKQAIAARLEREKVDVTLPVRESAASRGRIHPISQVIDEITAIFADMGFSIAEGPDIETDYYNFTALNFPEGHPAREMHDTFFFNADEKGERKLLRTHTSPVQVHTMEKFAAIRDKEDRDEPIRIVIPGKTYRMDSDATHSPMFHQVEGLVVDKSANVANMKWVLEEFCKSFFEVPSVKMRMRPSFFPFTEPSVEVDIQCDRSGPHVKFGEGNDWLEILGCGMVHPNVLRASGYDPDVYQGFAWGMGIDRIAMLKYGMPDLRAFFDADVRWIEHYGFRPLDIPTLFGGLSA.

Glu-269 contacts Mg(2+).

It belongs to the class-II aminoacyl-tRNA synthetase family. Phe-tRNA synthetase alpha subunit type 1 subfamily. As to quaternary structure, tetramer of two alpha and two beta subunits. Mg(2+) is required as a cofactor.

Its subcellular location is the cytoplasm. It catalyses the reaction tRNA(Phe) + L-phenylalanine + ATP = L-phenylalanyl-tRNA(Phe) + AMP + diphosphate + H(+). The polypeptide is Phenylalanine--tRNA ligase alpha subunit (Brucella anthropi (strain ATCC 49188 / DSM 6882 / CCUG 24695 / JCM 21032 / LMG 3331 / NBRC 15819 / NCTC 12168 / Alc 37) (Ochrobactrum anthropi)).